Here is a 451-residue protein sequence, read N- to C-terminus: 3-phosphoshikimate 1-carboxyvinyltransferase (451 aa).

3 residues coordinate 3-phosphoshikimate: K30, S31, and R35. K30 is a phosphoenolpyruvate binding site. Residues G103 and R131 each contribute to the phosphoenolpyruvate site. 4 residues coordinate 3-phosphoshikimate: S176, Q178, D329, and K356. Residue Q178 participates in phosphoenolpyruvate binding. D329 acts as the Proton acceptor in catalysis. The phosphoenolpyruvate site is built by R360 and R404.

It belongs to the EPSP synthase family. In terms of assembly, monomer.

The protein localises to the cytoplasm. The enzyme catalyses 3-phosphoshikimate + phosphoenolpyruvate = 5-O-(1-carboxyvinyl)-3-phosphoshikimate + phosphate. It functions in the pathway metabolic intermediate biosynthesis; chorismate biosynthesis; chorismate from D-erythrose 4-phosphate and phosphoenolpyruvate: step 6/7. Functionally, catalyzes the transfer of the enolpyruvyl moiety of phosphoenolpyruvate (PEP) to the 5-hydroxyl of shikimate-3-phosphate (S3P) to produce enolpyruvyl shikimate-3-phosphate and inorganic phosphate. This is 3-phosphoshikimate 1-carboxyvinyltransferase from Parvibaculum lavamentivorans (strain DS-1 / DSM 13023 / NCIMB 13966).